Consider the following 164-residue polypeptide: Transcription elongation factor GreA (164 aa).

Positions 50–76 (YHAAREEQGQQEARIRQLQDLLSNAKV) form a coiled coil.

It belongs to the GreA/GreB family.

Necessary for efficient RNA polymerase transcription elongation past template-encoded arresting sites. The arresting sites in DNA have the property of trapping a certain fraction of elongating RNA polymerases that pass through, resulting in locked ternary complexes. Cleavage of the nascent transcript by cleavage factors such as GreA or GreB allows the resumption of elongation from the new 3'terminus. GreA releases sequences of 2 to 3 nucleotides. The sequence is that of Transcription elongation factor GreA from Mycobacterium bovis (strain ATCC BAA-935 / AF2122/97).